Consider the following 507-residue polypeptide: Proton-coupled zinc antiporter SLC30A1 (507 aa).

Topologically, residues 1-10 are cytoplasmic; it reads MGCWGRNRGR. A helical transmembrane segment spans residues 11–31; it reads LLCMLALTFMFMVLEVVVSRV. The Extracellular segment spans residues 32–35; sequence TSSL. A helical transmembrane segment spans residues 36–56; it reads AMLSDSFHMLSDVLALVVALV. Zn(2+) is bound by residues histidine 43 and aspartate 47. The Cytoplasmic segment spans residues 57–78; sequence AERFARRTHATQKNTFGWIRAE. The helical transmembrane segment at 79–99 threads the bilayer; that stretch reads VMGALVNAIFLTGLCFAILLE. Residues 100 to 113 lie on the Extracellular side of the membrane; that stretch reads AIERFIEPHEMQQP. A helical membrane pass occupies residues 114–134; it reads LVVLGVGVAGLLVNVLGLCLF. The Cytoplasmic portion of the chain corresponds to 135–248; that stretch reads HHHSGFSQDS…RAGQLNMRGV (114 aa). The interval 142–217 is disordered; that stretch reads QDSGHGHSHG…DPENPRSGDT (76 aa). Residues 146–158 form a 6 X 2 AA approximate repeats of H-G region; sequence HGHSHGGHGHGHG. Basic residues predominate over residues 147–167; that stretch reads GHSHGGHGHGHGLPKGPRVKS. Polar residues predominate over residues 189-201; the sequence is TNTLVANTSNSNG. The chain crosses the membrane as a helical span at residues 249–269; it reads FLHVLGDALGSVIVVVNALVF. The Zn(2+) site is built by histidine 251 and aspartate 255. Topologically, residues 270–308 are extracellular; that stretch reads YFSWKGCSEGDFCVNPCFPDPCKAFVEIINSTHASVYEA. The N-linked (GlcNAc...) asparagine glycan is linked to asparagine 299. A helical membrane pass occupies residues 309–329; the sequence is GPCWVLYLDPTLCVVMVCILL. Residues 330–507 are Cytoplasmic-facing; the sequence is YTTYPLLKES…MPNKQPESSL (178 aa). Serine 506 carries the phosphoserine modification.

It belongs to the cation diffusion facilitator (CDF) transporter (TC 2.A.4) family. SLC30A subfamily. In terms of assembly, homodimer. Interacts with TMEM163. Interacts and forms a complex with TMC6 and TMC8; the interaction regulates zinc transport into the ER. (Microbial infection) Interacts with human papillomavirus 16/HPV16 protein E5; the interaction alleviates SLC30A1-mediated transcription factors inhibition. N-glycosylated at Asn-299. N-glycosylation promotes endocytosis and degradation through the proteasomal or lysosomal pathways.

The protein resides in the cell membrane. It localises to the basolateral cell membrane. The protein localises to the cytoplasmic vesicle membrane. It is found in the cytoplasm. Its subcellular location is the endoplasmic reticulum membrane. The protein resides in the golgi apparatus membrane. It localises to the nucleus membrane. It carries out the reaction Zn(2+)(in) + 2 H(+)(out) = Zn(2+)(out) + 2 H(+)(in). Functionally, zinc ion:proton antiporter that could function at the plasma membrane mediating zinc efflux from cells against its electrochemical gradient protecting them from intracellular zinc accumulation and toxicity. Alternatively, could prevent the transport to the plasma membrane of CACNB2, the L-type calcium channels regulatory subunit, through a yet to be defined mechanism. By modulating the expression of these channels at the plasma membrane, could prevent calcium and zinc influx into cells. By the same mechanism, could also prevent L-type calcium channels-mediated heavy metal influx into cells. In some cells, could also function as a zinc ion:proton antiporter mediating zinc entry into the lumen of cytoplasmic vesicles. In macrophages, can increase zinc ions concentration into the lumen of cytoplasmic vesicles containing engulfed bacteria and could help inactivate them. Forms a complex with TMC6/EVER1 and TMC8/EVER2 at the ER membrane of keratynocytes which facilitates zinc uptake into the ER. Down-regulates the activity of transcription factors induced by zinc and cytokines. The polypeptide is Proton-coupled zinc antiporter SLC30A1 (Homo sapiens (Human)).